We begin with the raw amino-acid sequence, 183 residues long: Adenine phosphoribosyltransferase (183 aa).

The protein belongs to the purine/pyrimidine phosphoribosyltransferase family. As to quaternary structure, homodimer.

The protein localises to the cytoplasm. The enzyme catalyses AMP + diphosphate = 5-phospho-alpha-D-ribose 1-diphosphate + adenine. It functions in the pathway purine metabolism; AMP biosynthesis via salvage pathway; AMP from adenine: step 1/1. In terms of biological role, catalyzes a salvage reaction resulting in the formation of AMP, that is energically less costly than de novo synthesis. The polypeptide is Adenine phosphoribosyltransferase (Edwardsiella ictaluri (strain 93-146)).